A 437-amino-acid polypeptide reads, in one-letter code: Homogentisate 1,2-dioxygenase (437 aa).

The active-site Proton acceptor is histidine 295. Positions 338 and 344 each coordinate Fe cation. 2 residues coordinate homogentisate: tyrosine 353 and histidine 374. Position 374 (histidine 374) interacts with Fe cation.

This sequence belongs to the homogentisate dioxygenase family. In terms of assembly, hexamer; dimer of trimers. Fe cation serves as cofactor.

The enzyme catalyses homogentisate + O2 = 4-maleylacetoacetate + H(+). Its pathway is amino-acid degradation; L-phenylalanine degradation; acetoacetate and fumarate from L-phenylalanine: step 4/6. Its function is as follows. Involved in the catabolism of homogentisate (2,5-dihydroxyphenylacetate or 2,5-OH-PhAc), a central intermediate in the degradation of phenylalanine and tyrosine. Catalyzes the oxidative ring cleavage of the aromatic ring of homogentisate to yield maleylacetoacetate. The sequence is that of Homogentisate 1,2-dioxygenase from Myxococcus xanthus (strain DK1622).